The primary structure comprises 56 residues: Large ribosomal subunit protein bL32 (56 aa).

The interval 1–56 (MAVPARRTSKAKKNKRRTHKGLTTPGLSRDSETGEYRMSHRISPDGTYKGRTIIEK) is disordered. Basic residues predominate over residues 7–20 (RTSKAKKNKRRTHK). Residues 29 to 38 (RDSETGEYRM) show a composition bias toward basic and acidic residues.

It belongs to the bacterial ribosomal protein bL32 family.

In Listeria monocytogenes serotype 4a (strain HCC23), this protein is Large ribosomal subunit protein bL32.